Here is a 370-residue protein sequence, read N- to C-terminus: Flagellar P-ring protein (370 aa).

Positions 1–21 (MKYILIKLSIVMIFIINSASK) are cleaved as a signal peptide.

This sequence belongs to the FlgI family. The basal body constitutes a major portion of the flagellar organelle and consists of four rings (L,P,S, and M) mounted on a central rod.

It localises to the bacterial flagellum basal body. Functionally, assembles around the rod to form the L-ring and probably protects the motor/basal body from shearing forces during rotation. The sequence is that of Flagellar P-ring protein from Wigglesworthia glossinidia brevipalpis.